A 258-amino-acid polypeptide reads, in one-letter code: Type III pantothenate kinase (258 aa).

7–14 lines the ATP pocket; that stretch reads DVGNTRLK. Residues Tyr96 and 103-106 each bind substrate; that span reads GADR. The Proton acceptor role is filled by Asp105. Residue Thr133 participates in ATP binding. Residue Thr183 coordinates substrate.

This sequence belongs to the type III pantothenate kinase family. In terms of assembly, homodimer. NH4(+) serves as cofactor. K(+) is required as a cofactor.

The protein localises to the cytoplasm. It carries out the reaction (R)-pantothenate + ATP = (R)-4'-phosphopantothenate + ADP + H(+). It functions in the pathway cofactor biosynthesis; coenzyme A biosynthesis; CoA from (R)-pantothenate: step 1/5. Functionally, catalyzes the phosphorylation of pantothenate (Pan), the first step in CoA biosynthesis. In Acidovorax ebreus (strain TPSY) (Diaphorobacter sp. (strain TPSY)), this protein is Type III pantothenate kinase.